Reading from the N-terminus, the 330-residue chain is Ketol-acid reductoisomerase (NADP(+)) (330 aa).

In terms of domain architecture, KARI N-terminal Rossmann spans 1–181; the sequence is MKVFYDSDFK…GLSRAGVIQT (181 aa). Residues 24–27, Arg-47, Ser-52, and 82–85 contribute to the NADP(+) site; these read YGSQ and DELQ. His-107 is an active-site residue. Gly-133 lines the NADP(+) pocket. Residues 182-327 enclose the KARI C-terminal knotted domain; it reads TFKEETETDL…AKLRKMCGLE (146 aa). 4 residues coordinate Mg(2+): Asp-190, Glu-194, Glu-226, and Glu-230. Ser-251 is a substrate binding site.

It belongs to the ketol-acid reductoisomerase family. Mg(2+) serves as cofactor.

It carries out the reaction (2R)-2,3-dihydroxy-3-methylbutanoate + NADP(+) = (2S)-2-acetolactate + NADPH + H(+). It catalyses the reaction (2R,3R)-2,3-dihydroxy-3-methylpentanoate + NADP(+) = (S)-2-ethyl-2-hydroxy-3-oxobutanoate + NADPH + H(+). Its pathway is amino-acid biosynthesis; L-isoleucine biosynthesis; L-isoleucine from 2-oxobutanoate: step 2/4. It participates in amino-acid biosynthesis; L-valine biosynthesis; L-valine from pyruvate: step 2/4. In terms of biological role, involved in the biosynthesis of branched-chain amino acids (BCAA). Catalyzes an alkyl-migration followed by a ketol-acid reduction of (S)-2-acetolactate (S2AL) to yield (R)-2,3-dihydroxy-isovalerate. In the isomerase reaction, S2AL is rearranged via a Mg-dependent methyl migration to produce 3-hydroxy-3-methyl-2-ketobutyrate (HMKB). In the reductase reaction, this 2-ketoacid undergoes a metal-dependent reduction by NADPH to yield (R)-2,3-dihydroxy-isovalerate. This is Ketol-acid reductoisomerase (NADP(+)) from Methanococcus maripaludis (strain DSM 14266 / JCM 13030 / NBRC 101832 / S2 / LL).